The chain runs to 297 residues: uncharacterized protein (297 aa).

One can recognise an HTH lysR-type domain in the interval 1–60; that stretch reads MNIELRHLRYFVAVAEELHFGRAAARLNISQPPLSQQIQALEQQIGARLLARTNRSVLLT. A DNA-binding region (H-T-H motif) is located at residues 20–40; the sequence is FGRAAARLNISQPPLSQQIQA.

This sequence belongs to the LysR transcriptional regulatory family.

This is an uncharacterized protein from Escherichia coli (strain K12).